A 296-amino-acid chain; its full sequence is 4-hydroxy-tetrahydrodipicolinate synthase (296 aa).

Thr49 contacts pyruvate. Tyr137 serves as the catalytic Proton donor/acceptor. Lys165 functions as the Schiff-base intermediate with substrate in the catalytic mechanism. Ile207 lines the pyruvate pocket.

This sequence belongs to the DapA family. Homotetramer; dimer of dimers.

The protein localises to the cytoplasm. It catalyses the reaction L-aspartate 4-semialdehyde + pyruvate = (2S,4S)-4-hydroxy-2,3,4,5-tetrahydrodipicolinate + H2O + H(+). It participates in amino-acid biosynthesis; L-lysine biosynthesis via DAP pathway; (S)-tetrahydrodipicolinate from L-aspartate: step 3/4. Catalyzes the condensation of (S)-aspartate-beta-semialdehyde [(S)-ASA] and pyruvate to 4-hydroxy-tetrahydrodipicolinate (HTPA). The sequence is that of 4-hydroxy-tetrahydrodipicolinate synthase from Bradyrhizobium diazoefficiens (strain JCM 10833 / BCRC 13528 / IAM 13628 / NBRC 14792 / USDA 110).